The following is a 300-amino-acid chain: NAD kinase (300 aa).

D77 serves as the catalytic Proton acceptor. NAD(+)-binding positions include 77–78, 151–152, H162, R179, D181, and 192–197; these read DG, ND, and TAYSLS.

The protein belongs to the NAD kinase family. A divalent metal cation serves as cofactor.

Its subcellular location is the cytoplasm. It catalyses the reaction NAD(+) + ATP = ADP + NADP(+) + H(+). Its function is as follows. Involved in the regulation of the intracellular balance of NAD and NADP, and is a key enzyme in the biosynthesis of NADP. Catalyzes specifically the phosphorylation on 2'-hydroxyl of the adenosine moiety of NAD to yield NADP. This chain is NAD kinase, found in Cellvibrio japonicus (strain Ueda107) (Pseudomonas fluorescens subsp. cellulosa).